A 1220-amino-acid chain; its full sequence is Plasma membrane calcium-transporting ATPase 3 (1220 aa).

Polar residues predominate over residues 1-20 (MGDMANSSIEFHPKPQQQRD). The disordered stretch occupies residues 1–23 (MGDMANSSIEFHPKPQQQRDVPQ). The Cytoplasmic segment spans residues 1–97 (MGDMANSSIE…NFIPPKQPKT (97 aa)). A Phosphoserine modification is found at Ser8. A helical membrane pass occupies residues 98–118 (FLQLVWEALQDVTLIILEVAA). Residues 119-155 (IVSLGLSFYAPPGEESEACGNVSGGAEDEGEAEAGWI) are Extracellular-facing. The helical transmembrane segment at 156-176 (EGAAILLSVICVVLVTAFNDW) threads the bilayer. Over 177 to 364 (SKEKQFRGLQ…KEKSVLQGKL (188 aa)) the chain is Cytoplasmic. Residues 298–355 (EEEKKDKKGKQQDGAMESSQTKAKKQDGAVAMEMQPLKSAEGGEMEEREKKKANAPKK) are disordered. Composition is skewed to basic and acidic residues over residues 299–308 (EEKKDKKGKQ) and 342–355 (MEER…APKK). A helical transmembrane segment spans residues 365–384 (TKLAVQIGKAGLVMSAITVI). Residues 385 to 417 (ILVLYFVIETFVVEGRTWLAECTPVYVQYFVKF) lie on the Extracellular side of the membrane. A helical membrane pass occupies residues 418 to 435 (FIIGVTVLVVAVPEGLPL). Topologically, residues 436–849 (AVTISLAYSV…MWGRNVYDSI (414 aa)) are cytoplasmic. Asp473 functions as the 4-aspartylphosphate intermediate in the catalytic mechanism. Positions 794 and 798 each coordinate Mg(2+). The chain crosses the membrane as a helical span at residues 850 to 869 (SKFLQFQLTVNVVAVIVAFT). At 870–879 (GACITQDSPL) the chain is on the extracellular side. A helical transmembrane segment spans residues 880–900 (KAVQMLWVNLIMDTFASLALA). The Cytoplasmic portion of the chain corresponds to 901-920 (TEPPTESLLLRKPYGRDKPL). The chain crosses the membrane as a helical span at residues 921-943 (ISRTMMKNILGHAVYQLAIIFTL). Residues 944–961 (LFVGELFFDIDSGRNAPL) lie on the Extracellular side of the membrane. Residues 962-983 (HSPPSEHYTIIFNTFVMMQLFN) traverse the membrane as a helical segment. Over 984-1002 (EINARKIHGERNVFDGIFS) the chain is Cytoplasmic. The chain crosses the membrane as a helical span at residues 1003-1024 (NPIFCTIVLGTFGIQIVIVQFG). Residues 1025-1034 (GKPFSCSPLS) lie on the Extracellular side of the membrane. Residues 1035–1056 (TEQWLWCLFVGVGELVWGQVIA) traverse the membrane as a helical segment. The Cytoplasmic portion of the chain corresponds to 1057–1220 (TIPTSQLKCL…SPLHSVETSL (164 aa)). Thr1079 carries the phosphothreonine modification. The calmodulin-binding subdomain A stretch occupies residues 1097-1114 (LRRGQILWFRGLNRIQTQ). Thr1113 is subject to Phosphothreonine; by PKC. Residues 1115-1124 (IRVVKAFRSS) form a calmodulin-binding subdomain B region. A disordered region spans residues 1166–1186 (ENEERLRAPPPPSPNQNNNAI).

The protein belongs to the cation transport ATPase (P-type) (TC 3.A.3) family. Type IIB subfamily. Interacts with PDZD11. Interacts (via N-terminus) with YWHAE. As to expression, highly expressed in the cerebellum. Expressed in adrenal glands.

The protein localises to the cell membrane. It localises to the presynaptic cell membrane. The catalysed reaction is Ca(2+)(in) + ATP + H2O = Ca(2+)(out) + ADP + phosphate + H(+). Its activity is regulated as follows. Down-regulated by YWHAE. Its function is as follows. ATP-driven Ca(2+) ion pump involved in the maintenance of basal intracellular Ca(2+) levels at the presynaptic terminals. Uses ATP as an energy source to transport cytosolic Ca(2+) ions across the plasma membrane to the extracellular compartment. May counter-transport protons, but the mechanism and the stoichiometry of this Ca(2+)/H(+) exchange remains to be established. This is Plasma membrane calcium-transporting ATPase 3 from Homo sapiens (Human).